The following is a 2458-amino-acid chain: Highly reducing polyketide synthase alnA (2458 aa).

The region spanning 48–473 (TMPIAIVGMA…GANAHVILDD (426 aa)) is the Ketosynthase family 3 (KS3) domain. Catalysis depends on for beta-ketoacyl synthase activity residues cysteine 221, histidine 356, and histidine 396. Residues 488 to 515 (HTTLSESEDSSDSGLEMDSSTSDSGEGQ) are disordered. Positions 499–515 (DSGLEMDSSTSDSGEGQ) are enriched in low complexity. Positions 609–932 (VFTGQGAQWP…PYMSVLSRGK (324 aa)) are malonyl-CoA:ACP transacylase (MAT) domain. Serine 697 functions as the For malonyltransferase activity in the catalytic mechanism. The tract at residues 1000–1130 (NDLLGVPVAQ…GSFSLHYEDA (131 aa)) is N-terminal hotdog fold. The PKS/mFAS DH domain maps to 1000–1307 (NDLLGVPVAQ…VTEVSAGAST (308 aa)). The segment at 1001–1305 (DLLGVPVAQQ…MTVTEVSAGA (305 aa)) is dehydratase (DH) domain. The Proton acceptor; for dehydratase activity role is filled by histidine 1032. A C-terminal hotdog fold region spans residues 1148–1307 (TRACRKLDVE…VTEVSAGAST (160 aa)). Aspartate 1218 serves as the catalytic Proton donor; for dehydratase activity. Residues 1740-2051 (GSPSQARWVP…GQQQHERVAA (312 aa)) form an enoylreductase (ER) domain region. The interval 2076–2264 (KPDATYILAG…VTDASHFNEN (189 aa)) is ketoreductase (KR) domain. Residues 2359–2441 (STTVAQAHEV…RLALKIVSKS (83 aa)) form the Carrier domain. Serine 2401 is modified (O-(pantetheine 4'-phosphoryl)serine).

The protein operates within polyketide biosynthesis. In terms of biological role, highly reducing polyketide synthase; part of the gene cluster that mediates the biosynthesis of asperlin, a polyketide showing anti-inflammatory, antitumor and antibiotic activities. The first step of the asperlin biosynthesis is the production of the intermediate 2,4,6-octatrienoic acid by the highly redusing polyketide synthase alnA with cleavage of the PKS product by the esterase alnB. 2,4,6-octatrienoic acid is further converted to asperlin via several steps involving the remaining enzymes from the cluster. The polypeptide is Highly reducing polyketide synthase alnA (Emericella nidulans (strain FGSC A4 / ATCC 38163 / CBS 112.46 / NRRL 194 / M139) (Aspergillus nidulans)).